A 159-amino-acid polypeptide reads, in one-letter code: MTLEELRGQDTVPESTARMQGAGKALHELLLSAQRQGCLTAGVYESAKVLNVDPDNVTFCVLAADEEDEGDIALQIHFTLIQAFCCENDIDIVRVGDVQRLAAIVGTGDESGAPVDLHCILISNPNEDAWKDPALEKLSLFCEESRSVNDWVPNITLPE.

The segment at 43–86 (VYESAKVLNVDPDNVTFCVLAADEEDEGDIALQIHFTLIQAFCC) is homodimerization.

It belongs to the GADD45 family. Undergoes concentration-dependent homodimerization, which is required for growth inhibititory activity and enhances interaction with PCNA. Interacts with GADD45GIP1. Interacts with PCNA.

In terms of biological role, involved in the regulation of growth and apoptosis. Mediates activation of stress-responsive MTK1/MEKK4 MAPKKK. This Bos taurus (Bovine) protein is Growth arrest and DNA damage-inducible protein GADD45 gamma (GADD45G).